Here is a 323-residue protein sequence, read N- to C-terminus: Beta-ketoacyl-[acyl-carrier-protein] synthase III (323 aa).

Catalysis depends on residues cysteine 113 and histidine 250. The interval 251-255 is ACP-binding; that stretch reads QANKR. Asparagine 280 is a catalytic residue.

It belongs to the thiolase-like superfamily. FabH family. Homodimer.

The protein resides in the cytoplasm. The catalysed reaction is malonyl-[ACP] + acetyl-CoA + H(+) = 3-oxobutanoyl-[ACP] + CO2 + CoA. Its pathway is lipid metabolism; fatty acid biosynthesis. In terms of biological role, catalyzes the condensation reaction of fatty acid synthesis by the addition to an acyl acceptor of two carbons from malonyl-ACP. Catalyzes the first condensation reaction which initiates fatty acid synthesis and may therefore play a role in governing the total rate of fatty acid production. Possesses both acetoacetyl-ACP synthase and acetyl transacylase activities. Its substrate specificity determines the biosynthesis of branched-chain and/or straight-chain of fatty acids. The chain is Beta-ketoacyl-[acyl-carrier-protein] synthase III from Brucella anthropi (strain ATCC 49188 / DSM 6882 / CCUG 24695 / JCM 21032 / LMG 3331 / NBRC 15819 / NCTC 12168 / Alc 37) (Ochrobactrum anthropi).